We begin with the raw amino-acid sequence, 350 residues long: Protein O-mannose kinase (350 aa).

The residue at position 1 (M1) is an N-acetylmethionine. Topologically, residues 1-20 are cytoplasmic; that stretch reads MEKQPQNSRRGLAPREVPPA. Residues 21–43 traverse the membrane as a helical; Signal-anchor for type II membrane protein segment; it reads VGLLLIMALMNTLLYLCLDHFFI. Topologically, residues 44-350 are lumenal; sequence APRQSTVDPT…AMMSQAREML (307 aa). One can recognise a Protein kinase domain in the interval 81–350; sequence VRQLKRVGEG…AMMSQAREML (270 aa). 3 N-linked (GlcNAc...) asparagine glycosylation sites follow: N165, N220, and N235.

This sequence belongs to the protein kinase superfamily. Ser/Thr protein kinase family. STKL subfamily. In terms of tissue distribution, highest expression is observed in brain, skeletal muscle, kidney and heart in fetal and adult tissues.

The protein localises to the endoplasmic reticulum membrane. It catalyses the reaction 3-O-[beta-D-GalNAc-(1-&gt;3)-beta-D-GlcNAc-(1-&gt;4)-alpha-D-Man]-L-Thr-[protein] + ATP = 3-O-[beta-D-GalNAc-(1-&gt;3)-beta-D-GlcNAc-(1-&gt;4)-(O-6-P-alpha-D-Man)]-Thr-[protein] + ADP + H(+). Its function is as follows. Protein O-mannose kinase that specifically mediates phosphorylation at the 6-position of an O-mannose of the trisaccharide (N-acetylgalactosamine (GalNAc)-beta-1,3-N-acetylglucosamine (GlcNAc)-beta-1,4-mannose) to generate phosphorylated O-mannosyl trisaccharide (N-acetylgalactosamine-beta-1,3-N-acetylglucosamine-beta-1,4-(phosphate-6-)mannose). Phosphorylated O-mannosyl trisaccharide is a carbohydrate structure present in alpha-dystroglycan (DAG1), which is required for binding laminin G-like domain-containing extracellular proteins with high affinity. Only shows kinase activity when the GalNAc-beta-3-GlcNAc-beta-terminus is linked to the 4-position of O-mannose, suggesting that this disaccharide serves as the substrate recognition motif. The sequence is that of Protein O-mannose kinase (POMK) from Homo sapiens (Human).